The following is a 398-amino-acid chain: ATP-dependent RNA helicase eIF4A (398 aa).

The short motif at 25-53 (DSFDSMELKPELLRGVYAYGFERPSAIQQ) is the Q motif element. Positions 56–226 (ILPIVKGNDV…TKFMRDPVRI (171 aa)) constitute a Helicase ATP-binding domain. 69–76 (AQSGTGKT) lines the ATP pocket. Positions 174-177 (DEAD) match the DEAD box motif. A Helicase C-terminal domain is found at 237-398 (GIKQFYIAVE…EMPMNVADLI (162 aa)).

Belongs to the DEAD box helicase family. eIF4A subfamily. Component of the eIF4F complex, which composition varies with external and internal environmental conditions. It is composed of at least eIF4A, eIF4E and eIF4G.

The protein localises to the cytoplasm. The catalysed reaction is ATP + H2O = ADP + phosphate + H(+). Functionally, ATP-dependent RNA helicase which is a subunit of the eIF4F complex involved in cap recognition and is required for mRNA binding to ribosome. In the current model of translation initiation, eIF4A unwinds RNA secondary structures in the 5'-UTR of mRNAs which is necessary to allow efficient binding of the small ribosomal subunit, and subsequent scanning for the initiator codon. The polypeptide is ATP-dependent RNA helicase eIF4A (tif1) (Emericella nidulans (strain FGSC A4 / ATCC 38163 / CBS 112.46 / NRRL 194 / M139) (Aspergillus nidulans)).